The chain runs to 156 residues: 3-hydroxyacyl-[acyl-carrier-protein] dehydratase FabZ (156 aa).

The active site involves His-57.

Belongs to the thioester dehydratase family. FabZ subfamily.

The protein resides in the cytoplasm. It carries out the reaction a (3R)-hydroxyacyl-[ACP] = a (2E)-enoyl-[ACP] + H2O. Its function is as follows. Involved in unsaturated fatty acids biosynthesis. Catalyzes the dehydration of short chain beta-hydroxyacyl-ACPs and long chain saturated and unsaturated beta-hydroxyacyl-ACPs. The polypeptide is 3-hydroxyacyl-[acyl-carrier-protein] dehydratase FabZ (Anaeromyxobacter dehalogenans (strain 2CP-1 / ATCC BAA-258)).